The chain runs to 493 residues: MHLEFEKAHDVLLEDVRDTVNIRQTHFSSPKRLANRWDHRLSDESLSQGASPLKNSVKTATTSVPIPLGVGRPASLFYPWQSMTMTGTKESNTRNPMTCNIGEAAFDISSALNYADPSGSTELVACFRENTRLIHNPPYQDWDTTLTCGSTSAIDIVLRMLCNRGDWILAEASTYTGTVMAAKAHGLNIQSIEMDEEGLLPVDLDNKLRYWDTSRSRKPFVLYTIPSGHNPTGITQSTARKAAIYQIAERHDLLVLEDDPYFFLRLDGSFSSLDINPPYSSFEKLRKSLPSSYLSLDKSGRVIRVDSTSKILAPGLRCGWLTASKQIVEIFENFAEVGPAPPSGPSQVMLYKLFVESWGQEGFANWLNHLSGEYKSRRDIMIAACSQHLPKGLCTWTTPTHGMFLWITIDLARHPDYSEKRENLSLDLEDKIYERAASYGVAVAKGSWFNVEACLDKVFFRITFVSTTCLDDLENGVKRLGAAVRDEFRFTQA.

This sequence belongs to the class-I pyridoxal-phosphate-dependent aminotransferase family. Requires pyridoxal 5'-phosphate as cofactor.

It participates in mycotoxin biosynthesis. Aminotransferase; part of the gene cluster that mediates the biosynthesis of swainsonine (SW), a cytotoxic fungal alkaloid and a potential cancer therapy drug. Swainsonine production occurs via a multibranched pathway and is dispensable for fungal colonization of plants and infection of insect hosts. The first step of swainsonine biosynthesis is the production of the precursor pipecolic acid (PA) via conversion of L-lysine (Lys) to 1-piperideine-6-carboxylate (P6C) by the aminotransferase swnA, the latter being further reduced to PA by the reductase swnR. The PKS-NRPS hybrid synthetase swnK uptakes and condensates PA and malonyl-CoA with and without skipping of the ketoreductase (KR) domain in order to produce 3 intermediates, 1-oxoindolizidine, (1S)-1-hydroxyindolizin, and (1R)-1-hydroxyindolizine; with the transisomer (1S)-1-hydroxyindolizin being predominant. The terminal thioester reductase (TE) domain of swnK is involved in reduction of the thioester bond to release the intermediate aldehydes. The oxidoreductase swnN could contribute to the reduction of 1-oxoindolizidine to (1S)-1-hydroxyindolizin and (1R)-1-hydroxyindolizine, contributing to the major route of SW production. The dioxygenase swnH2 would be responsible for the oxidization of (1R)-1-hydroxyindolizine into (1R,2S)-1,2-dihydroxyindolizine and of (1S)-1-hydroxyindolizin to yield both (1R,2S)-1,2-dihydroxyindolizine and (1S,2S)-1,2-dihydroxyindolizine. The dioxygenase swnH1 then performs the conversion of the 1,2-dihydroxyindolizine epimers to SW. The chain is Aminotransferase swnA from Arthroderma benhamiae (strain ATCC MYA-4681 / CBS 112371) (Trichophyton mentagrophytes).